A 314-amino-acid chain; its full sequence is Serine protease 46 (314 aa).

The region spanning Val-44 to Gly-281 is the Peptidase S1 domain. Cys-69 and Cys-85 are joined by a disulfide. Residues His-84 and Asp-130 each act as charge relay system in the active site. 3 disulfide bridges follow: Cys-164/Cys-239, Cys-197/Cys-219, and Cys-229/Cys-257. The active-site Charge relay system is the Ser-233. The chain crosses the membrane as a helical span at residues Phe-293–Leu-313.

It belongs to the peptidase S1 family.

The protein resides in the membrane. This is Serine protease 46 (Prss46) from Mus musculus (Mouse).